A 239-amino-acid polypeptide reads, in one-letter code: MGRKWNNIKEKKASKDANTSRIYAKFGREIYVAAKQGEPDPESNQALKVVLERAKTYSVPKNIIERAIEKAKGGAEENFDELRYEGFGPNGSMIIVDALTNNVNRTAPEVRAAFGKNGGNMGVSGSVAYMFDATAVIGVEGKTADEALELLMEADVDVRDILEEDDSVIVYAEPDQFHAVQEAFKNAGVEEFTVAELTMLAQNEVELPEDAKAQFEKLIDVLEDLEDVQQVYHNVDLGE.

This sequence belongs to the TACO1 family. YeeN subfamily.

It is found in the cytoplasm. The protein is Probable transcriptional regulatory protein RBAM_007230 of Bacillus velezensis (strain DSM 23117 / BGSC 10A6 / LMG 26770 / FZB42) (Bacillus amyloliquefaciens subsp. plantarum).